We begin with the raw amino-acid sequence, 272 residues long: Aquaporin-11 (272 aa).

Topologically, residues 1 to 14 (MTALRALWSEMQDT) are cytoplasmic. The helical transmembrane segment at 15-35 (CTSLGLMLSVVLLAGLARVVA) threads the bilayer. At 36-47 (RQQQLHRPMAHA) the chain is on the lumenal side. A helical membrane pass occupies residues 48–68 (FVLEFLATLQLCCCTHELLLL). The Cytoplasmic segment spans residues 69 to 75 (SEQEPAH). Residues 76 to 96 (PTWPLTLIYFFTLVHGLTLVG) form a helical membrane-spanning segment. Over 97–167 (TSSNPCGVMM…NPIQVDLPKA (71 aa)) the chain is Lumenal. An NPC motif is present at residues 100 to 102 (NPC). The helical transmembrane segment at 168–188 (VIVEALCSFIFHSALLNFQEV) threads the bilayer. Topologically, residues 189–195 (RPKLRIH) are cytoplasmic. The helical transmembrane segment at 196-216 (LLAALITFLVYAGGSLTGAVF) threads the bilayer. An NPA motif is present at residues 217 to 219 (NPA). At 217–235 (NPALALSLHFKCFDEAFLQ) the chain is on the lumenal side. The helical transmembrane segment at 236 to 256 (FFIVYWLAPSLGILLMILMFS) threads the bilayer. Residues 257 to 272 (FFLPWLYNNHTINKKE) lie on the Cytoplasmic side of the membrane.

It belongs to the MIP/aquaporin (TC 1.A.8) family. AQP11/AQP12 subfamily. In terms of assembly, homodimer; disulfide-linked. Homotetramer. Can also form homomultimer. Post-translationally, not glycosylated. In terms of tissue distribution, expressed in retina specifically at retinal Mueller glial cells.

The protein localises to the endoplasmic reticulum membrane. It localises to the cytoplasmic vesicle membrane. The protein resides in the cell membrane. The enzyme catalyses H2O(in) = H2O(out). It carries out the reaction glycerol(in) = glycerol(out). It catalyses the reaction H2O2(out) = H2O2(in). Channel protein that facilitates the transport of water, glycerol and hydrogen peroxide across membrane of cell or organelles guaranteeing intracellular homeostasis in several organes like liver, kidney and brain. In situation of stress, participates in endoplasmic reticulum (ER) homeostasis by regulating redox homeostasis through the transport of hydrogen peroxide across the endoplasmic reticulum membrane thereby regulating the oxidative stress through the NADPH oxidase 2 pathway. Plays a role by maintaining an environment suitable for translation or protein foldings in the ER lumen namely by participating in the PKD1 glycosylation processing resulting in regulation of PKD1 membrane trafficking thereby preventing the accumulation of unfolding protein in ER. Plays a role in the proximal tubule function by regulating its endosomal acidification. May play a role in postnatal kidney development. The protein is Aquaporin-11 of Equus caballus (Horse).